The sequence spans 57 residues: Large ribosomal subunit protein bL32 (57 aa).

Positions 1–20 are disordered; the sequence is MAVQQRRSSKHRRDKRRSHD. The segment covering 7-18 has biased composition (basic residues); the sequence is RSSKHRRDKRRS.

Belongs to the bacterial ribosomal protein bL32 family.

This chain is Large ribosomal subunit protein bL32 (rpmF), found in Mycoplasma genitalium (strain ATCC 33530 / DSM 19775 / NCTC 10195 / G37) (Mycoplasmoides genitalium).